The following is a 257-amino-acid chain: Neuroendocrine secretory protein 55 (257 aa).

The signal sequence occupies residues 1–46 (MDRRSRAQQWRRARHNYNDLCPPIGRRAATALLWLSCSIALLRALA). Positions 61–257 (SFLNAHHRSA…RKGPIPIRRH (197 aa)) are disordered. Residues 70–82 (AAAAAAAQVLPES) show a composition bias toward low complexity. Positions 86–103 (ESDHEHEEVEPELARPEC) are enriched in basic and acidic residues. Residues 104 to 139 (LEYDQDDYETETDSETEPESDIESETEIETEPETEP) are compositionally biased toward acidic residues. Basic and acidic residues predominate over residues 200-211 (EPQRGPLDQDPR). Over residues 227–237 (PRRCKTRRPAR) the composition is skewed to basic residues.

This sequence belongs to the NESP55 family. Post-translationally, binds keratan sulfate chains. May be proteolytically processed to give rise to a number of active peptides.

The protein localises to the cytoplasmic vesicle. Its subcellular location is the secretory vesicle. The protein resides in the secreted. This is Neuroendocrine secretory protein 55 from Mus musculus (Mouse).